The following is a 290-amino-acid chain: Zinc finger protein-like 1 homolog (290 aa).

The segment at 1 to 43 adopts a B box-type; degenerate zinc-finger fold; the sequence is MGLCKCPKRQVTTQFCFEHRVNVCENCMVVNHTKCTVQSYIQW. Residues 53–101 form an RING-type; atypical zinc finger; the sequence is CPLCGSPLDNEDCVRLICYHVFHWKCLNAKQQSLPANTAPGGHTCPTCS. Residues 156-168 show a composition bias toward polar residues; that stretch reads NGNTFASSMSQTR. The segment at 156–175 is disordered; the sequence is NGNTFASSMSQTRSNERPES. A helical membrane pass occupies residues 249-269; sequence WFLVLGGCIGFVCIIYVLATL.

The protein belongs to the ZFPL1 family.

Its subcellular location is the membrane. In Aedes aegypti (Yellowfever mosquito), this protein is Zinc finger protein-like 1 homolog.